The following is a 355-amino-acid chain: Serum paraoxonase/arylesterase 1 (355 aa).

A disulfide bridge connects residues cysteine 42 and cysteine 353. Residues glutamate 53 and aspartate 54 each coordinate Ca(2+). Residue histidine 115 is the Proton acceptor of the active site. Residues isoleucine 117, asparagine 168, aspartate 169, and asparagine 224 each coordinate Ca(2+). A glycan (N-linked (GlcNAc...) asparagine) is linked at asparagine 253. Residues aspartate 269 and asparagine 270 each coordinate Ca(2+). N-linked (GlcNAc...) asparagine glycans are attached at residues asparagine 270 and asparagine 324.

The protein belongs to the paraoxonase family. Homodimer. Interacts with CLU. Ca(2+) serves as cofactor. Post-translationally, glycosylated. The signal sequence is not cleaved. As to expression, plasma. Associated with HDL.

The protein localises to the secreted. Its subcellular location is the extracellular space. It catalyses the reaction a phenyl acetate + H2O = a phenol + acetate + H(+). The enzyme catalyses An aryl dialkyl phosphate + H2O = dialkyl phosphate + an aryl alcohol.. The catalysed reaction is an N-acyl-L-homoserine lactone + H2O = an N-acyl-L-homoserine + H(+). Hydrolyzes the toxic metabolites of a variety of organophosphorus insecticides. Capable of hydrolyzing a broad spectrum of organophosphate substrates and lactones, and a number of aromatic carboxylic acid esters. Mediates an enzymatic protection of low density lipoproteins against oxidative modification. This chain is Serum paraoxonase/arylesterase 1 (Pon1), found in Rattus norvegicus (Rat).